We begin with the raw amino-acid sequence, 507 residues long: Putative histone deacetylase 2 (507 aa).

Positions 29–342 (RNVAYYYHKD…WALETGVILG (314 aa)) are histone deacetylase. The active site involves His-162. The tract at residues 444–507 (EECFVEEDSK…RKDLNIPGIP (64 aa)) is disordered. Basic and acidic residues predominate over residues 482–501 (SHSDVIEEAKYEDRDRRKDL).

The protein belongs to the histone deacetylase family. HD type 1 subfamily. May be a component of a histone deacetylase complex containing saeg-2, saeg-1 and hda-2.

It localises to the nucleus. The catalysed reaction is N(6)-acetyl-L-lysyl-[histone] + H2O = L-lysyl-[histone] + acetate. Its function is as follows. Probably responsible for the deacetylation of lysine residues on the N-terminal part of the core histones (H2A, H2B, H3 and H4). Histone deacetylation gives a tag for epigenetic repression and plays an important role in transcriptional regulation, cell cycle progression and developmental events. Histone deacetylases act via the formation of large multiprotein complexes. As a likely component of a histone deacetylase complex, together with saeg-1 and hda-2, functions downstream of the cAMP-dependent kinase egl-4 to regulate the expression of genes required for egg-laying and forgaging. The sequence is that of Putative histone deacetylase 2 (hda-2) from Caenorhabditis elegans.